The following is a 257-amino-acid chain: 3-deoxy-manno-octulosonate cytidylyltransferase (257 aa).

The protein belongs to the KdsB family.

The protein localises to the cytoplasm. The catalysed reaction is 3-deoxy-alpha-D-manno-oct-2-ulosonate + CTP = CMP-3-deoxy-beta-D-manno-octulosonate + diphosphate. The protein operates within nucleotide-sugar biosynthesis; CMP-3-deoxy-D-manno-octulosonate biosynthesis; CMP-3-deoxy-D-manno-octulosonate from 3-deoxy-D-manno-octulosonate and CTP: step 1/1. It participates in bacterial outer membrane biogenesis; lipopolysaccharide biosynthesis. Functionally, activates KDO (a required 8-carbon sugar) for incorporation into bacterial lipopolysaccharide in Gram-negative bacteria. The chain is 3-deoxy-manno-octulosonate cytidylyltransferase from Chromohalobacter salexigens (strain ATCC BAA-138 / DSM 3043 / CIP 106854 / NCIMB 13768 / 1H11).